The primary structure comprises 471 residues: MFNLNFFNYTCHCEWCFWVLPSYNGLGLTPQMGWDNWNTFACNVSEDLLLNTADRISDIGLKDLGYKYVILDDCWSSGRDEDGFLVADEQKFPNGMGHVADRLHNNSFLFGMYSSAGEYTCAGYPGSLGREEEDAQFFANNRVDYLKYDNCYNKGRFGTPESSHKRYKAMSDALNKTGRPIFYSLCNWGQDLTFYWGSDIANSWRMSGDITAEFSRPDSRCPCDGDEYDCKYAGYHCSIMNILNKAAPMGQNGGIGGWNDLDNLEVGVGNLTDDEEKTHFSMWAMVKSPLIIGADVNHLKASSYSIYSQSSVIAINQDPKGIPATRVWRYYVPQTDKYGQGEIQFWSGPLENGDQVIALLNGGMKARPMNATLEDIFFDSYQGSEELSTSWDIYDLWANRIDNATASAILENNKVTNNTLYNATKLSYKEGLLNGDSRLFGTKVGTISPDGIINTTVPAHGIALYRLRSSS.

The first 18 residues, 1–18 (MFNLNFFNYTCHCEWCFW), serve as a signal peptide directing secretion. Cys-42 and Cys-74 are joined by a disulfide. N-linked (GlcNAc...) asparagine glycosylation is present at Asn-43. Substrate-binding residues include Asp-72 and Asp-73. Asn-105 is a glycosylation site (N-linked (GlcNAc...) asparagine). A disulfide bridge connects residues Cys-121 and Cys-151. Lys-147 is a binding site for substrate. The Nucleophile role is filled by Asp-149. Asn-175 is a glycosylation site (N-linked (GlcNAc...) asparagine). Arg-205 is a binding site for substrate. Asp-209 (proton donor) is an active-site residue. 2 disulfides stabilise this stretch: Cys-221/Cys-237 and Cys-223/Cys-230. Residue Gln-251 coordinates substrate. Asn-270, Asn-370, Asn-403, Asn-417, Asn-422, and Asn-454 each carry an N-linked (GlcNAc...) asparagine glycan.

Belongs to the glycosyl hydrolase 27 family. As to quaternary structure, homotetramer.

The protein resides in the secreted. The catalysed reaction is Hydrolysis of terminal, non-reducing alpha-D-galactose residues in alpha-D-galactosides, including galactose oligosaccharides, galactomannans and galactolipids.. The chain is Alpha-galactosidase (MEL) from Saccharomyces paradoxus (Yeast).